The following is a 398-amino-acid chain: Lysophosphatidylserine lipase ABHD12 (398 aa).

Residues M1–C15 show a composition bias toward basic and acidic residues. Positions M1–G24 are disordered. The Cytoplasmic segment spans residues M1–K74. The helical transmembrane segment at I75–G95 threads the bilayer. The Extracellular portion of the chain corresponds to I96–H398. An N-linked (GlcNAc...) asparagine glycan is attached at N123. S246 functions as the Nucleophile in the catalytic mechanism. Catalysis depends on charge relay system residues D333 and H372.

Belongs to the serine esterase family. Post-translationally, glycosylated.

The protein localises to the endoplasmic reticulum membrane. It localises to the mitochondrion. The enzyme catalyses 1-(9Z-octadecenoyl)-sn-glycero-3-phospho-L-serine + H2O = sn-glycero-3-phospho-L-serine + (9Z)-octadecenoate + H(+). It catalyses the reaction 1-(9Z-octadecenoyl)-sn-glycero-3-phospho-(1'-sn-glycerol) + H2O = sn-glycero-3-phospho-(1'-sn-glycerol) + (9Z)-octadecenoate + H(+). It carries out the reaction 1-(9Z-octadecenoyl)-sn-glycero-3-phospho-(1D-myo-inositol) + H2O = sn-glycero-3-phospho-1D-myo-inositol + (9Z)-octadecenoate + H(+). The catalysed reaction is 1-(9Z-octadecenoyl)-sn-glycero-3-phosphoethanolamine + H2O = sn-glycero-3-phosphoethanolamine + (9Z)-octadecenoate + H(+). The enzyme catalyses 1-(9Z-octadecenoyl)-sn-glycero-3-phosphocholine + H2O = 1-(9Z-octadecenoyl)-sn-glycerol + phosphocholine + H(+). It catalyses the reaction 2-(9Z-octadecenoyl)-glycerol + H2O = glycerol + (9Z)-octadecenoate + H(+). It carries out the reaction 1-hexadecanoyl-sn-glycero-3-phospho-L-serine + H2O = sn-glycero-3-phospho-L-serine + hexadecanoate + H(+). The catalysed reaction is 2-(5Z,8Z,11Z,14Z-eicosatetraenoyl)-glycerol + H2O = glycerol + (5Z,8Z,11Z,14Z)-eicosatetraenoate + H(+). The enzyme catalyses Hydrolyzes glycerol monoesters of long-chain fatty acids.. It catalyses the reaction 1-decanoylglycerol + H2O = decanoate + glycerol + H(+). It carries out the reaction 1-dodecanoylglycerol + H2O = dodecanoate + glycerol + H(+). The catalysed reaction is 1-tetradecanoylglycerol + H2O = tetradecanoate + glycerol + H(+). The enzyme catalyses 2-hexadecanoylglycerol + H2O = glycerol + hexadecanoate + H(+). It catalyses the reaction 1-(9Z-octadecenoyl)-glycerol + H2O = glycerol + (9Z)-octadecenoate + H(+). It carries out the reaction 2-(9Z,12Z-octadecadienoyl)-glycerol + H2O = (9Z,12Z)-octadecadienoate + glycerol + H(+). The catalysed reaction is 1-(5Z,8Z,11Z,14Z-eicosatetraenoyl)-glycerol + H2O = glycerol + (5Z,8Z,11Z,14Z)-eicosatetraenoate + H(+). The enzyme catalyses 1-(9Z,12Z-octadecadienoyl)-glycerol + H2O = (9Z,12Z)-octadecadienoate + glycerol + H(+). It catalyses the reaction 1-hexadecanoylglycerol + H2O = glycerol + hexadecanoate + H(+). It carries out the reaction 1-octadecanoylglycerol + H2O = octadecanoate + glycerol + H(+). The catalysed reaction is 1-octadecanoyl-2-(9,10-epoxyoctadecanoyl)-sn-glycero-3-phospho-L-serine + H2O = 9,10-epoxyoctadecanoate + 1-octadecanoyl-sn-glycero-3-phosphoserine + H(+). The enzyme catalyses 1-octadecanoyl-2-(10-hydroxyoctadecanoyl)-sn-glycero-3-phospho-L-serine + H2O = 1-octadecanoyl-sn-glycero-3-phosphoserine + 10-hydroxyoctadecanoate + H(+). It catalyses the reaction 1-hexadecanoyl-2-(10-hydroxyoctadecanoyl)-sn-glycero-3-phospho-L-serine + H2O = 10-hydroxyoctadecanoate + 1-hexadecanoyl-sn-glycero-3-phospho-L-serine + H(+). Its activity is regulated as follows. Selectively inhibited by DO264 (N-3-pyridyl-N'-(1-[3-chloro-4-{2-chloro-4-(trifluoromethoxy)phenoxy}pyridine-2-yl]piperidin-4-yl)thiourea). Its function is as follows. Lysophosphatidylserine (LPS) lipase that mediates the hydrolysis of lysophosphatidylserine, a class of signaling lipids that regulates immunological and neurological processes. Represents a major lysophosphatidylserine lipase in the brain, thereby playing a key role in the central nervous system. Also able to hydrolyze oxidized phosphatidylserine; oxidized phosphatidylserine is produced in response to severe inflammatory stress and constitutes a proapoptotic 'eat me' signal. Also has monoacylglycerol (MAG) lipase activity: hydrolyzes 2-arachidonoylglycerol (2-AG), thereby acting as a regulator of endocannabinoid signaling pathways. Has a strong preference for very-long-chain lipid substrates; substrate specificity is likely due to improved catalysis and not improved substrate binding. This Mus musculus (Mouse) protein is Lysophosphatidylserine lipase ABHD12.